Consider the following 663-residue polypeptide: Translation factor GUF1 homolog, mitochondrial (663 aa).

Residues 1–33 (MAGAAALRRSARRVVLPGAYALSRALQHPERLL) constitute a mitochondrion transit peptide. Residues 55–247 (ERVRNFSIIA…AVIERIPSPP (193 aa)) enclose the tr-type G domain. GTP is bound by residues 64 to 71 (AHVDHGKS), 140 to 144 (DTPGH), and 194 to 197 (NKID).

The protein belongs to the TRAFAC class translation factor GTPase superfamily. Classic translation factor GTPase family. LepA subfamily.

It is found in the mitochondrion inner membrane. The catalysed reaction is GTP + H2O = GDP + phosphate + H(+). Promotes mitochondrial protein synthesis. May act as a fidelity factor of the translation reaction, by catalyzing a one-codon backward translocation of tRNAs on improperly translocated ribosomes. Binds to mitochondrial ribosomes in a GTP-dependent manner. This is Translation factor GUF1 homolog, mitochondrial from Oryza sativa subsp. japonica (Rice).